A 115-amino-acid chain; its full sequence is Mediator of RNA polymerase II transcription subunit 22 (115 aa).

This sequence belongs to the Mediator complex subunit 22 family. Component of the Mediator complex.

The protein localises to the nucleus. Its function is as follows. Component of the Mediator complex, a coactivator involved in the regulated transcription of nearly all RNA polymerase II-dependent genes. Mediator functions as a bridge to convey information from gene-specific regulatory proteins to the basal RNA polymerase II transcription machinery. Mediator is recruited to promoters by direct interactions with regulatory proteins and serves as a scaffold for the assembly of a functional preinitiation complex with RNA polymerase II and the general transcription factors. The protein is Mediator of RNA polymerase II transcription subunit 22 (SRB6) of Candida albicans (strain SC5314 / ATCC MYA-2876) (Yeast).